A 495-amino-acid polypeptide reads, in one-letter code: Putative FAD-containing monooxygenase MymA (495 aa).

FAD-binding positions include Ser-15, Glu-36, Trp-45, 56–57, and Val-104; that span reads DS.

The protein belongs to the FAD-binding monooxygenase family. Requires FAD as cofactor.

Required for maintaining the appropriate mycolic acid composition and permeability of the envelope on its exposure to acidic pH. This is Putative FAD-containing monooxygenase MymA (mymA) from Mycobacterium tuberculosis (strain CDC 1551 / Oshkosh).